The sequence spans 442 residues: Protein phosphatase 2C 3 (442 aa).

The interval 30–100 (RFRMSPSEMN…VSISDGNSSV (71 aa)) is disordered. Over residues 79-90 (PEEESVSLEDSD) the composition is skewed to acidic residues. Residues 120-433 (RYGVASVCGR…DNVSVVVIDL (314 aa)) enclose the PPM-type phosphatase domain. Residues Asp-162, Gly-163, and Asp-339 each contribute to the Mn(2+) site. The disordered stretch occupies residues 363–401 (GRGRRRGETQTPGRRSEEEGKEEEEKVVGSRKNGKRGEI). Residues 376 to 390 (RRSEEEGKEEEEKVV) are compositionally biased toward basic and acidic residues. Asp-424 is a binding site for Mn(2+).

This sequence belongs to the PP2C family. Part of a K(+)-channel calcium-sensing kinase/phosphatase complex composed by a calcium sensor CBL (CBL1, CBL2, CBL3 or CBL9), a kinase CIPK (CIPK6, CIPK16 or CIPK23), a phosphatase PP2C (AIP1) and a K(+)-channel (AKT1). Interacts with AKT1 and CIPK23. Interacts with PYL8/RCAR3 in an abscisic acid-independent. Interacts with PYR1/RCAR11 in an abscisic acid-dependent manner. Mg(2+) serves as cofactor. It depends on Mn(2+) as a cofactor. As to expression, expressed in shoot meristem, vascular tissues of cotyledons, and in primary roots surrounding the root meristem. Highly expressed in seeds.

It is found in the cell membrane. The protein resides in the cytoplasm. It localises to the nucleus. It catalyses the reaction O-phospho-L-seryl-[protein] + H2O = L-seryl-[protein] + phosphate. The catalysed reaction is O-phospho-L-threonyl-[protein] + H2O = L-threonyl-[protein] + phosphate. Its function is as follows. Involved in the negative regulation of the K(+) potassium channel AKT1 by its dephosphorylation, antagonistically to CIPK proteins (e.g. CIPK23). Functions as a positive regulator of abscisic acid-mediated cell signaling during seedling growth. Involved in the regulation of seed dormancy. Acts as a negative regulator of seed dormancy by inhibiting abscisic signaling and subsequently activating gibberellic acid signaling. In Arabidopsis thaliana (Mouse-ear cress), this protein is Protein phosphatase 2C 3.